The primary structure comprises 273 residues: uncharacterized protein (273 aa).

This is an uncharacterized protein from Acanthamoeba polyphaga (Amoeba).